The sequence spans 1184 residues: Protocadherin-12 (1184 aa).

The signal sequence occupies residues 1 to 24 (MMQLLQLLLGLLGPGGYLFLLGDC). Residues 25–718 (QEVTTLTVKY…PGALSMSMLT (694 aa)) lie on the Extracellular side of the membrane. 5 Cadherin domains span residues 28 to 135 (TTLT…QPRF), 136 to 244 (PKGE…SPAF), 245 to 352 (AESS…IPSI), 355 to 460 (TWAS…APVF), and 461 to 565 (EKSR…APEV). A glycan (N-linked (GlcNAc...) asparagine) is linked at Asn415. Residues Asn582, Asn659, and Asn662 are each glycosylated (N-linked (GlcNAc...) asparagine). Residues 600 to 711 (PAGTDTPPLA…LRDSARKPGA (112 aa)) enclose the Cadherin 6 domain. A helical transmembrane segment spans residues 719 to 739 (VICLAVLLGIFGLILALFMSI). Over 740–1184 (CRTEKKDNRA…RGSSSSSRCL (445 aa)) the chain is Cytoplasmic. 2 disordered regions span residues 854-928 (RQRN…ESGP) and 973-1023 (QFQP…DPEE). Residue Ser859 is modified to Phosphoserine. Positions 1012 to 1023 (PEQEEGPLDPEE) are enriched in acidic residues. At Ser1062 the chain carries Phosphoserine. The segment at 1153–1184 (SAASGMKVQGDPGGKTGTEGKSRGSSSSSRCL) is disordered. Over residues 1175 to 1184 (RGSSSSSRCL) the composition is skewed to low complexity.

Cleaved by ADAM10 close to the transmembrane domain to release the Protocadherin-12, secreted form in the serum. Cleavage results in reduced cellular adhesion in a cell migration assay. In terms of tissue distribution, expressed in highly vascularized tissues including the heart and placenta, but most tissues contain a low level of expression. Prominent expression in the spleen. Present in villous and extravillous trophoblast (at protein level).

Its subcellular location is the cell membrane. It is found in the cell junction. The protein localises to the secreted. Functionally, cellular adhesion molecule that may play an important role in cell-cell interactions at interendothelial junctions. Acts as a regulator of cell migration, probably via increasing cell-cell adhesion. Promotes homotypic calcium-dependent aggregation and adhesion and clusters at intercellular junctions. Unable to bind to catenins, weakly associates with the cytoskeleton. In Homo sapiens (Human), this protein is Protocadherin-12.